An 858-amino-acid chain; its full sequence is Potassium transporter 7 (858 aa).

Acidic residues-rich tracts occupy residues 1-16 and 38-53; these read MAEESSMEGSEKEEID and QDDDDSEIGVDDDNDG. A disordered region spans residues 1-68; it reads MAEESSMEGS…LESDEDEIPE (68 aa). Residues 1–104 lie on the Cytoplasmic side of the membrane; it reads MAEESSMEGS…DYEDLTVGRK (104 aa). A helical transmembrane segment spans residues 105 to 125; sequence VLLAFQTLGVVFGDVGTSPLY. Over 126 to 147 the chain is Extracellular; that stretch reads TFSVMFSKSPVQEKEDVIGALS. The helical transmembrane segment at 148 to 168 threads the bilayer; that stretch reads LVLYTLLLVPLIKYVLVVLWA. At 169-232 the chain is on the cytoplasmic side; sequence NDDGEGGTFA…KLENSLILKK (64 aa). Residues 233–253 form a helical membrane-spanning segment; it reads ILLVLVLAGTSMVIADGVVTP. Residues 254–269 lie on the Extracellular side of the membrane; it reads AMSVMSAVGGLKVGVD. A helical transmembrane segment spans residues 270–290; sequence VVEQDQVVMISVAFLVILFSL. The Cytoplasmic segment spans residues 291–297; the sequence is QKYGTSK. The helical transmembrane segment at 298 to 318 threads the bilayer; it reads MGLVVGPALLIWFCSLAGIGI. The Extracellular segment spans residues 319–345; the sequence is YNLIKYDSSVYRAFNPVHIYYFFKRNS. The helical transmembrane segment at 346–366 threads the bilayer; that stretch reads INAWYALGGCILCATGSEALF. Topologically, residues 367 to 380 are cytoplasmic; that stretch reads ADLCYFSVRSVQLT. A helical transmembrane segment spans residues 381 to 401; the sequence is FVCLVLPCLMLGYMGQAAYLM. At 402–413 the chain is on the extracellular side; sequence ENHADASQAFFS. A helical membrane pass occupies residues 414 to 434; it reads SVPGSAFWPVLFIANIAALIA. The Cytoplasmic segment spans residues 435–470; that stretch reads SRTMTTATFSCIKQSTALGCFPRLKIIHTSRKFMGQ. A helical membrane pass occupies residues 471–491; that stretch reads IYIPVLNWFLLAVCLVVVCSI. Over 492-496 the chain is Extracellular; sequence SSIDE. A helical membrane pass occupies residues 497–517; the sequence is IGNAYGMAELGVMMTTTILVT. A topological domain (cytoplasmic) is located at residue L518. The chain crosses the membrane as a helical span at residues 519–539; the sequence is IMLLIWQINIVIVIAFLVVFL. The Extracellular portion of the chain corresponds to 540–552; the sequence is GVELVFFSSVIAS. The helical transmembrane segment at 553 to 573 threads the bilayer; that stretch reads VGDGSWIILVFAVIMFGIMYI. Residues 574-858 are Cytoplasmic-facing; the sequence is WNYGSKLRYE…LMQVGMTYMV (285 aa). The segment at 707-731 is disordered; that stretch reads QERSLESDGNDDSDSEEDFPGSRVV. Over residues 714 to 725 the composition is skewed to acidic residues; it reads DGNDDSDSEEDF. Residues S719 and S721 each carry the phosphoserine modification.

Belongs to the HAK/KUP transporter (TC 2.A.72.3) family.

Its subcellular location is the cell membrane. In terms of biological role, probable potassium transporter. This Arabidopsis thaliana (Mouse-ear cress) protein is Potassium transporter 7 (POT7).